Consider the following 234-residue polypeptide: 3-dehydroquinate dehydratase (234 aa).

3-dehydroquinate-binding positions include 33 to 35 and R68; that span reads EWR. H124 acts as the Proton donor/acceptor in catalysis. Catalysis depends on K151, which acts as the Schiff-base intermediate with substrate. Residues R193, S214, and Q218 each coordinate 3-dehydroquinate.

This sequence belongs to the type-I 3-dehydroquinase family. In terms of assembly, homodimer.

It carries out the reaction 3-dehydroquinate = 3-dehydroshikimate + H2O. Its pathway is metabolic intermediate biosynthesis; chorismate biosynthesis; chorismate from D-erythrose 4-phosphate and phosphoenolpyruvate: step 3/7. Its function is as follows. Involved in the third step of the chorismate pathway, which leads to the biosynthesis of aromatic amino acids. Catalyzes the cis-dehydration of 3-dehydroquinate (DHQ) and introduces the first double bond of the aromatic ring to yield 3-dehydroshikimate. This Syntrophobacter fumaroxidans (strain DSM 10017 / MPOB) protein is 3-dehydroquinate dehydratase.